A 187-amino-acid chain; its full sequence is UPF0340 protein SPT_0687 (187 aa).

This sequence belongs to the UPF0340 family.

The chain is UPF0340 protein SPT_0687 from Streptococcus pneumoniae (strain Taiwan19F-14).